Consider the following 663-residue polypeptide: Zeaxanthin epoxidase, chloroplastic (663 aa).

Residues Met1–Lys50 constitute a chloroplast transit peptide. FAD-binding positions include Lys81–Glu109 and Thr359–Asp372. Positions Leu547 to Gly611 constitute an FHA domain.

It depends on FAD as a cofactor. In terms of tissue distribution, higher expression in leaves than in roots.

It is found in the plastid. It localises to the chloroplast membrane. The protein resides in the chloroplast thylakoid membrane. The catalysed reaction is all-trans-zeaxanthin + 4 reduced [2Fe-2S]-[ferredoxin] + 2 O2 + 4 H(+) = all-trans-violaxanthin + 4 oxidized [2Fe-2S]-[ferredoxin] + 2 H2O. It functions in the pathway plant hormone biosynthesis; abscisate biosynthesis. Its function is as follows. Converts zeaxanthin into antheraxanthin and subsequently violaxanthin. Involved in the epoxidation of zeaxanthin. Plays an important role in resistance to stresses, seed development and dormancy. This Nicotiana plumbaginifolia (Leadwort-leaved tobacco) protein is Zeaxanthin epoxidase, chloroplastic (ABA2).